The primary structure comprises 511 residues: MNDRLFIFDTTLRDGEQSPGASMTKDEKLRIARQLEKLGVDVIEAGFAAASPGDADAIRAIAETVRNSTVCSLARANERDIHAAGGAIKPAKSGRIHTFIATSPIHMEKKLRMQPDQVVEAAVKAVKLAREYTDDVEFSAEDAVRSDMDFLVRIFDEVIKAGAKTINVPDTVGYSIPALWGERMKALIERVPGSDKVIWSTHCHNDLGMAVANSLAAVMNGARQVECTINGLGERAGNASLEEIVMAVRTRRDVFGCDTRIDATQIVPSSKLVSTITGYPVQPNKAIVGANAFAHESGIHQDGVLKHRETYEIMRAEDVGWNANRLTLGKLSGRNAFKTKLAELGIVLDSEEALNAAFARFKDLADKKREIFDEDLQALVSDEGYATEDERFKLLSMKVCSETGEVPRAQLVFTDDGAEKQASGEGSGPVDATFKALESVVHSGADLLLYSVNNITSGTDAQGEVTVRLAQDGRVVNGQGADTDIVVASAKAYLHALNKLHSKRERAHPQV.

One can recognise a Pyruvate carboxyltransferase domain in the interval 5–267; that stretch reads LFIFDTTLRD…DTRIDATQIV (263 aa). Mn(2+) contacts are provided by D14, H202, H204, and N238. The regulatory domain stretch occupies residues 393-511; it reads KLLSMKVCSE…SKRERAHPQV (119 aa).

It belongs to the alpha-IPM synthase/homocitrate synthase family. LeuA type 1 subfamily. In terms of assembly, homodimer. Requires Mn(2+) as cofactor.

It localises to the cytoplasm. The catalysed reaction is 3-methyl-2-oxobutanoate + acetyl-CoA + H2O = (2S)-2-isopropylmalate + CoA + H(+). It functions in the pathway amino-acid biosynthesis; L-leucine biosynthesis; L-leucine from 3-methyl-2-oxobutanoate: step 1/4. In terms of biological role, catalyzes the condensation of the acetyl group of acetyl-CoA with 3-methyl-2-oxobutanoate (2-ketoisovalerate) to form 3-carboxy-3-hydroxy-4-methylpentanoate (2-isopropylmalate). The polypeptide is 2-isopropylmalate synthase (Thiobacillus denitrificans (strain ATCC 25259 / T1)).